The primary structure comprises 167 residues: Pathogenesis-related protein PR-1 type (167 aa).

An N-terminal signal peptide occupies residues 1–29 (MAHNHWCNLFSVALVCVVALVMVQYSVAQ). In terms of domain architecture, SCP spans 36–155 (VDAHNAARSA…NGAWFITCNY (120 aa)). 3 cysteine pairs are disulfide-bonded: C72/C144, C117/C123, and C139/C153.

Belongs to the CRISP family.

Functionally, probably involved in the defense reaction of plants against pathogens. The protein is Pathogenesis-related protein PR-1 type of Sambucus nigra (European elder).